The sequence spans 138 residues: Transcription antitermination protein NusB (138 aa).

It belongs to the NusB family.

In terms of biological role, involved in transcription antitermination. Required for transcription of ribosomal RNA (rRNA) genes. Binds specifically to the boxA antiterminator sequence of the ribosomal RNA (rrn) operons. This is Transcription antitermination protein NusB from Helicobacter pylori (strain Shi470).